The chain runs to 171 residues: Transcription factor E (171 aa).

Positions 1-81 (MLNLAKELVG…YWKVNVNQIN (81 aa)) constitute an HTH TFE/IIEalpha-type domain.

It belongs to the TFE family. As to quaternary structure, monomer. Interaction with RNA polymerase subunits RpoF and RpoE is necessary for Tfe stimulatory transcription activity. Able to interact with Tbp and RNA polymerase in the absence of DNA promoter. Interacts both with the preinitiation and elongation complexes.

In terms of biological role, transcription factor that plays a role in the activation of archaeal genes transcribed by RNA polymerase. Facilitates transcription initiation by enhancing TATA-box recognition by TATA-box-binding protein (Tbp), and transcription factor B (Tfb) and RNA polymerase recruitment. Not absolutely required for transcription in vitro, but particularly important in cases where Tbp or Tfb function is not optimal. It dynamically alters the nucleic acid-binding properties of RNA polymerases by stabilizing the initiation complex and destabilizing elongation complexes. Seems to translocate with the RNA polymerase following initiation and acts by binding to the non template strand of the transcription bubble in elongation complexes. This Sulfolobus acidocaldarius (strain ATCC 33909 / DSM 639 / JCM 8929 / NBRC 15157 / NCIMB 11770) protein is Transcription factor E.